The sequence spans 197 residues: Cell division protein SepF (197 aa).

Positions 15–89 (EEEEVEGPEE…RMNNNSKNNS (75 aa)) are disordered. Positions 22 to 42 (PEERESSRSRERVQEREDYNR) are enriched in basic and acidic residues. Polar residues predominate over residues 43–73 (NENQATPQTFNNKQQAIKSVPQKNTLRSNTT). The segment covering 80–89 (RMNNNSKNNS) has biased composition (low complexity).

The protein belongs to the SepF family. In terms of assembly, homodimer. Interacts with FtsZ.

It localises to the cytoplasm. Functionally, cell division protein that is part of the divisome complex and is recruited early to the Z-ring. Probably stimulates Z-ring formation, perhaps through the cross-linking of FtsZ protofilaments. Its function overlaps with FtsA. This Staphylococcus epidermidis (strain ATCC 35984 / DSM 28319 / BCRC 17069 / CCUG 31568 / BM 3577 / RP62A) protein is Cell division protein SepF.